The chain runs to 655 residues: p-hydroxybenzoic acid efflux pump subunit AaeB (655 aa).

Helical transmembrane passes span 13–33 (FAVKLATAIVLALFVGFHFQL), 38–58 (WAVLTAAIVAAGPAFAAGGEP), 69–89 (LRIIGTFIGCIAGLVIIIAMI), 93–113 (LLMILVCCIWAGFCTWISSLV), 121–141 (WGLAGYTALIIVITIQPEPLL), 152–172 (EIVIGIVCAIMADLLFSPRSI), 370–390 (LFWLWTGWTSGSGAMVMIAVV), 407–427 (FIYGTLAALPLGLLYFLVIIP), 431–451 (QSMLLLCISLAVLGFFLGIEV), 459–479 (MGALASTINIIVLDNPMTFHF), and 482–502 (FLDSALGQIVGCVLAFTVILL).

Belongs to the aromatic acid exporter ArAE (TC 2.A.85) family.

It localises to the cell inner membrane. Forms an efflux pump with AaeA. Could function as a metabolic relief valve, allowing to eliminate certain compounds when they accumulate to high levels in the cell. This chain is p-hydroxybenzoic acid efflux pump subunit AaeB, found in Escherichia coli O7:K1 (strain IAI39 / ExPEC).